The chain runs to 165 residues: SsrA-binding protein (165 aa).

The disordered stretch occupies residues 141–165; sequence KLHDKRQEEKRKQADREVKSALARY. Basic and acidic residues predominate over residues 145 to 159; sequence KRQEEKRKQADREVK.

This sequence belongs to the SmpB family.

Its subcellular location is the cytoplasm. Its function is as follows. Required for rescue of stalled ribosomes mediated by trans-translation. Binds to transfer-messenger RNA (tmRNA), required for stable association of tmRNA with ribosomes. tmRNA and SmpB together mimic tRNA shape, replacing the anticodon stem-loop with SmpB. tmRNA is encoded by the ssrA gene; the 2 termini fold to resemble tRNA(Ala) and it encodes a 'tag peptide', a short internal open reading frame. During trans-translation Ala-aminoacylated tmRNA acts like a tRNA, entering the A-site of stalled ribosomes, displacing the stalled mRNA. The ribosome then switches to translate the ORF on the tmRNA; the nascent peptide is terminated with the 'tag peptide' encoded by the tmRNA and targeted for degradation. The ribosome is freed to recommence translation, which seems to be the essential function of trans-translation. The protein is SsrA-binding protein of Prochlorococcus marinus (strain MIT 9303).